A 435-amino-acid polypeptide reads, in one-letter code: Light-independent protochlorophyllide reductase subunit N (435 aa).

[4Fe-4S] cluster is bound by residues C23, C48, and C108.

It belongs to the BchN/ChlN family. As to quaternary structure, protochlorophyllide reductase is composed of three subunits; ChlL, ChlN and ChlB. Forms a heterotetramer of two ChlB and two ChlN subunits. The cofactor is [4Fe-4S] cluster.

It localises to the plastid. Its subcellular location is the chloroplast. It carries out the reaction chlorophyllide a + oxidized 2[4Fe-4S]-[ferredoxin] + 2 ADP + 2 phosphate = protochlorophyllide a + reduced 2[4Fe-4S]-[ferredoxin] + 2 ATP + 2 H2O. Its pathway is porphyrin-containing compound metabolism; chlorophyll biosynthesis (light-independent). In terms of biological role, component of the dark-operative protochlorophyllide reductase (DPOR) that uses Mg-ATP and reduced ferredoxin to reduce ring D of protochlorophyllide (Pchlide) to form chlorophyllide a (Chlide). This reaction is light-independent. The NB-protein (ChlN-ChlB) is the catalytic component of the complex. The protein is Light-independent protochlorophyllide reductase subunit N of Auxenochlorella protothecoides (Green microalga).